Here is a 567-residue protein sequence, read N- to C-terminus: Frizzled-7 (567 aa).

The N-terminal stretch at 1 to 31 (MRPAAGEAGAGLRWLGLAALLAALLGTPCAA) is a signal peptide. Over 32–250 (AHHEDKAISV…EAEVRFARLW (219 aa)) the chain is Extracellular. The region spanning 42-161 (PDHGFCQPIS…HGAGEICVGQ (120 aa)) is the FZ domain. Disulfide bonds link C47/C108, C55/C101, C92/C129, C118/C158, and C122/C146. N-linked (GlcNAc...) asparagine glycosylation occurs at N61. Residue N162 is glycosylated (N-linked (GlcNAc...) asparagine). A helical membrane pass occupies residues 251–271 (VGVWSVLCCASTLFTVLTYLV). Residues 272-282 (DMRRFSYPERP) are Cytoplasmic-facing. The helical transmembrane segment at 283 to 303 (IIFLSGCYFMVAVAYAAGFLL) threads the bilayer. Topologically, residues 304–330 (EERVVCLERFSEDGYRTVAQGTKKEGC) are extracellular. Residues 331 to 351 (TILFMILYFFGMASSIWWVIL) form a helical membrane-spanning segment. The Cytoplasmic portion of the chain corresponds to 352–373 (SLTWFLAAGMKWGHEAIEANSQ). A helical membrane pass occupies residues 374-394 (YFHLAAWAVPAVKTITILAMG). The Extracellular portion of the chain corresponds to 395 to 417 (QVDGDVLSGVCYVGIYSVDSLRG). Residues 418-438 (FVLAPLFVYLFIGTSFLLAGF) traverse the membrane as a helical segment. Residues 439-464 (VSLFRIRTIMKHDGTKTEKLEKLMVR) lie on the Cytoplasmic side of the membrane. The helical transmembrane segment at 465-485 (IGVFSVLYTVPATIVVACYFY) threads the bilayer. Residues 486–521 (EQAFRSTWEKTWLLQTCKTYAVPCPSHFAPMSPDFT) are Extracellular-facing. Residues 522–542 (VFMIKYLMTMIVGITTGFWIW) form a helical membrane-spanning segment. Over 543–567 (SGKTLQSWRRFYHRLSTGSKGETAV) the chain is Cytoplasmic. A Lys-Thr-X-X-X-Trp motif, mediates interaction with the PDZ domain of Dvl family members motif is present at residues 545–550 (KTLQSW). The short motif at 565 to 567 (TAV) is the PDZ-binding element.

Belongs to the G-protein coupled receptor Fz/Smo family. In terms of tissue distribution, expressed broadly in cranial ectoderm. Also expressed in the developing somites and in other cranial placodes, including the olfactory, lens, otic placodes (lateral half of the vesicle) and epibranchial placodes. Low level of expression in all the mesoderm derivatives in the limb buds.

It is found in the cell membrane. The protein localises to the endosome membrane. Receptor for Wnt proteins. Most of frizzled receptors are coupled to the beta-catenin canonical signaling pathway, which leads to the activation of disheveled proteins, inhibition of GSK-3 kinase, nuclear accumulation of beta-catenin and activation of Wnt target genes. A second signaling pathway involving PKC and calcium fluxes has been seen for some family members, but it is not yet clear if it represents a distinct pathway or if it can be integrated in the canonical pathway, as PKC seems to be required for Wnt-mediated inactivation of GSK-3 kinase. Both pathways seem to involve interactions with G-proteins. May be involved in transduction and intercellular transmission of polarity information during tissue morphogenesis and/or in differentiated tissues. This chain is Frizzled-7 (FZD7), found in Gallus gallus (Chicken).